A 420-amino-acid polypeptide reads, in one-letter code: 2',3'-cyclic-nucleotide 3'-phosphodiesterase (420 aa).

Residue Ser9 is modified to Phosphoserine. Residue Tyr110 is modified to Phosphotyrosine. Phosphoserine occurs at positions 169, 227, and 239. The active-site Proton acceptor is His250. Thr252 serves as a coordination point for substrate. At Thr262 the chain carries Phosphothreonine. His329 (proton donor) is an active-site residue. Position 331 (Thr331) interacts with substrate. Ser358 is subject to Phosphoserine. Position 417 is a cysteine methyl ester (Cys417). The S-farnesyl cysteine moiety is linked to residue Cys417. A propeptide spans 418–420 (TII) (removed in mature form).

This sequence belongs to the 2H phosphoesterase superfamily. CNPase family. Exists as monomers and homodimers.

It is found in the membrane. The protein resides in the melanosome. It catalyses the reaction a nucleoside 2',3'-cyclic phosphate + H2O = a nucleoside 2'-phosphate + H(+). Functionally, catalyzes the formation of 2'-nucleotide products from 2',3'-cyclic substrates. May participate in RNA metabolism in the myelinating cell, CNP is the third most abundant protein in central nervous system myelin. This chain is 2',3'-cyclic-nucleotide 3'-phosphodiesterase, found in Rattus norvegicus (Rat).